The sequence spans 342 residues: Phenylalanine--tRNA ligase alpha subunit (342 aa).

Residue E255 participates in Mg(2+) binding.

This sequence belongs to the class-II aminoacyl-tRNA synthetase family. Phe-tRNA synthetase alpha subunit type 1 subfamily. In terms of assembly, tetramer of two alpha and two beta subunits. It depends on Mg(2+) as a cofactor.

Its subcellular location is the cytoplasm. It carries out the reaction tRNA(Phe) + L-phenylalanine + ATP = L-phenylalanyl-tRNA(Phe) + AMP + diphosphate + H(+). This chain is Phenylalanine--tRNA ligase alpha subunit, found in Pelotomaculum thermopropionicum (strain DSM 13744 / JCM 10971 / SI).